A 131-amino-acid polypeptide reads, in one-letter code: Glycine cleavage system H protein (131 aa).

A Lipoyl-binding domain is found at 24-106 (RVTVGISDHA…YGEGWIFVVE (83 aa)). Residue Lys65 is modified to N6-lipoyllysine.

The protein belongs to the GcvH family. In terms of assembly, the glycine cleavage system is composed of four proteins: P, T, L and H. (R)-lipoate serves as cofactor.

In terms of biological role, the glycine cleavage system catalyzes the degradation of glycine. The H protein shuttles the methylamine group of glycine from the P protein to the T protein. This Xanthomonas axonopodis pv. citri (strain 306) protein is Glycine cleavage system H protein.